A 162-amino-acid polypeptide reads, in one-letter code: Caveolin-2 (162 aa).

Topologically, residues 1–86 are cytoplasmic; it reads MGLETEKADV…FEISKYVMYK (86 aa). At Y19 the chain carries Phosphotyrosine; by SRC. Phosphoserine is present on residues S20 and S23. Y27 bears the Phosphotyrosine mark. S36 is subject to Phosphoserine. The helical intramembrane region spans 87–107; it reads FLTVFLAIPLAFIAGILFATL. Residues 108–162 lie on the Cytoplasmic side of the membrane; it reads SCLHIWILMPFVKTCLMVLPSVQTIWKSVTDVVIGPLCTSVGRSFSSVSMQLSHD.

This sequence belongs to the caveolin family. Monomer or homodimer. Interacts with CAV1; the interaction forms a stable heterooligomeric complex that is required for targeting to lipid rafts and for caveolae formation. Tyrosine phosphorylated forms do not form heterooligomers with the Tyr-19-phosphorylated form existing as a monomer or dimer, and the Tyr-27-form as a monomer only. Interacts (tyrosine phosphorylated form) with the SH2 domain-containing proteins, RASA1, NCK1 and SRC. Interacts (tyrosine phosphorylated form) with INSR, the interaction (Tyr-27-phosphorylated form) is increased on insulin stimulation. Interacts (Tyr-19 phosphorylated form) with MAPK1 (phosphorylated form); the interaction, promoted by insulin, leads to nuclear location and MAPK1 activation. Interacts with STAT3; the interaction is increased on insulin-induced tyrosine phosphorylation leading to STAT activation. In terms of processing, phosphorylated on serine and tyrosine residues. CAV1 promotes phosphorylation on Ser-23 which then targets the complex to the plasma membrane, lipid rafts and caveolae. Phosphorylation on Ser-36 appears to modulate mitosis in endothelial cells. Phosphorylation on both Tyr-19 and Tyr-27 is required for insulin-induced 'Ser-727' phosphorylation of STAT3 and its activation. Phosphorylation on Tyr-19 is required for insulin-induced phosphorylation of MAPK1 and DNA binding of STAT3. Tyrosine phosphorylation is induced by both EGF and insulin.

It localises to the nucleus. It is found in the cytoplasm. The protein localises to the golgi apparatus membrane. Its subcellular location is the cell membrane. The protein resides in the membrane. It localises to the caveola. In terms of biological role, may act as a scaffolding protein within caveolar membranes. Interacts directly with G-protein alpha subunits and can functionally regulate their activity. Acts as an accessory protein in conjunction with CAV1 in targeting to lipid rafts and driving caveolae formation. The Ser-36 phosphorylated form has a role in modulating mitosis in endothelial cells. Positive regulator of cellular mitogenesis of the MAPK signaling pathway. Required for the insulin-stimulated nuclear translocation and activation of MAPK1 and STAT3, and the subsequent regulation of cell cycle progression. This chain is Caveolin-2 (Cav2), found in Mus musculus (Mouse).